The primary structure comprises 63 residues: MAFLKKSLFLVLFLGLVSLSICEKEKKEQEDEDENEEEKESEEGSEEKRGLLDTLGGILGLGR.

Positions 1-22 are cleaved as a signal peptide; sequence MAFLKKSLFLVLFLGLVSLSIC. Residues 23–49 constitute a propeptide that is removed on maturation; sequence EKEKKEQEDEDENEEEKESEEGSEEKR. The segment at 25–63 is disordered; that stretch reads EKKEQEDEDENEEEKESEEGSEEKRGLLDTLGGILGLGR. Over residues 30–45 the composition is skewed to acidic residues; it reads EDEDENEEEKESEEGS. Leucine 61 is modified (leucine amide).

In terms of tissue distribution, expressed by the skin glands.

Its subcellular location is the secreted. In terms of biological role, antimicrobial peptide with selective activity. Is only active against Micrococcus luteus (MIC=25 ug/ml) and not against Bacillus cereus, Escherichia coli, Leuconostoc mesenteroides, Micrococcus luteus, Pastewella haemolytica, Staphylococcus aureus, Streptococcus faecalis and Streptococcus uberis. In Nyctimystes infrafrenatus (White-lipped tree frog), this protein is Frenatin 1.1.